The chain runs to 893 residues: Probable ion channel CASTOR (893 aa).

The interval methionine 1–alanine 94 is disordered. Pro residues predominate over residues proline 65–alanine 85. The helical transmembrane segment at threonine 132–valine 152 threads the bilayer. Residues serine 156–serine 178 are a coiled coil. A run of 3 helical transmembrane segments spans residues leucine 210–phenylalanine 230, leucine 266–valine 286, and leucine 318–valine 338. 2 RCK N-terminal domains span residues glutamine 359 to valine 500 and proline 619 to leucine 792. A coiled-coil region spans residues threonine 389–threonine 415.

The protein belongs to the castor/pollux (TC 1.A.1.23) family. As to expression, expressed in roots, leaves, stems and panicles.

It is found in the nucleus membrane. Functionally, required for mycorrhizal symbiosis. In Oryza sativa subsp. japonica (Rice), this protein is Probable ion channel CASTOR.